The following is a 207-amino-acid chain: MARYIGPKAKLSRREGTDLFLKSARRSLADKCKLDSKPGQHGRTSGARTSDYGTQLREKQKVKRIYGVLERQFRRYFAEADRRKGNTGENLLQLLESRLDNVVYRMGFGSTRAEARQLVSHKAITVNGIVANIPSQQVKAGDVISIREKAKKQARIVEALSLAEQGGMPSWVAVDAKKFEGTFKQVPERADIAGDINESLIVELYSR.

The disordered stretch occupies residues 31 to 55; that stretch reads KCKLDSKPGQHGRTSGARTSDYGTQ. A compositionally biased stretch (polar residues) spans 42 to 53; the sequence is GRTSGARTSDYG. Positions 97–160 constitute an S4 RNA-binding domain; that stretch reads SRLDNVVYRM…KKQARIVEAL (64 aa).

It belongs to the universal ribosomal protein uS4 family. In terms of assembly, part of the 30S ribosomal subunit. Contacts protein S5. The interaction surface between S4 and S5 is involved in control of translational fidelity.

In terms of biological role, one of the primary rRNA binding proteins, it binds directly to 16S rRNA where it nucleates assembly of the body of the 30S subunit. With S5 and S12 plays an important role in translational accuracy. The chain is Small ribosomal subunit protein uS4 from Burkholderia thailandensis (strain ATCC 700388 / DSM 13276 / CCUG 48851 / CIP 106301 / E264).